Consider the following 313-residue polypeptide: tRNA uridine(34) hydroxylase (313 aa).

The Rhodanese domain occupies 124-218; the sequence is SDPEVLLIDT…YLEEVPQQES (95 aa). Catalysis depends on Cys178, which acts as the Cysteine persulfide intermediate.

The protein belongs to the TrhO family.

The catalysed reaction is uridine(34) in tRNA + AH2 + O2 = 5-hydroxyuridine(34) in tRNA + A + H2O. Its function is as follows. Catalyzes oxygen-dependent 5-hydroxyuridine (ho5U) modification at position 34 in tRNAs. The chain is tRNA uridine(34) hydroxylase from Pseudomonas fluorescens (strain ATCC BAA-477 / NRRL B-23932 / Pf-5).